Reading from the N-terminus, the 320-residue chain is MSSSIEEVKATIKSVKLTDSQAEKLSKLIDSLPKILSGLDNPEYDEIFGYRINTKDKPYVDESIRNEILLKFLAADDYNLELSEKRLIDSLNWRNEFQPLSAAFEETFDKELNELGVITNFPNSNLKITTWNLYGNLKNPKKIFEKFGANNKVSKLPGSQFLRWRVGLMEKSLQLIDFTSTTDNRIAQVHDYNNVSMFKIDPGMKKATKEIITIFGANYPELLSTKFFINVPLIMGWVFTFFKTIRVITEATLKKFQVLNHGNLSESFNPDELPKVYGGKVEKSLFDIDVSDDIKLSEYGEVILKKVGDEEINHINDDVE.

A CRAL-TRIO domain is found at 120 to 285; sequence NFPNSNLKIT…VYGGKVEKSL (166 aa). Residues tyrosine 134, arginine 165, histidine 190, tyrosine 192, and lysine 226 each contribute to the heme site.

This sequence belongs to the SFH5 family. The cofactor is heme b.

The protein resides in the cytoplasm. The protein localises to the endoplasmic reticulum membrane. It is found in the microsome membrane. The catalysed reaction is a 1,2-diacyl-sn-glycero-3-phospho-(1D-myo-inositol)(in) = a 1,2-diacyl-sn-glycero-3-phospho-(1D-myo-inositol)(out). Non-classical phosphatidylinositol (PtdIns) transfer protein (PITP), which exhibits PtdIns-binding/transfer activity in the absence of detectable PtdCho-binding/transfer activity. Regulates PtdIns(4,5)P2 homeostasis at the plasma membrane. Heme-binding protein that may play a role in organic oxidant-induced stress responses. The sequence is that of Phosphatidylinositol transfer protein SFH5 (SFH5) from Candida albicans (strain SC5314 / ATCC MYA-2876) (Yeast).